The following is a 559-amino-acid chain: NXPE family member 3 (559 aa).

An N-terminal signal peptide occupies residues methionine 1–valine 30. Residues asparagine 26, asparagine 237, and asparagine 346 are each glycosylated (N-linked (GlcNAc...) asparagine).

The protein belongs to the NXPE family.

The protein resides in the secreted. This is NXPE family member 3 (NXPE3) from Bos taurus (Bovine).